The following is a 587-amino-acid chain: Kelch-like protein 3 (587 aa).

The tract at residues methionine 1 to asparagine 22 is disordered. Serine 10 is modified (phosphoserine). The 68-residue stretch at cysteine 50–glutamate 117 folds into the BTB domain. Residues cysteine 152–glutamate 254 form the BACK domain. Phosphothreonine is present on threonine 295. Kelch repeat units lie at residues valine 302–glycine 347, histidine 348–aspartate 394, leucine 396–glycine 441, lysine 442–glycine 490, glutamine 491–glycine 537, and leucine 539–lysine 585. At threonine 375 the chain carries Phosphothreonine. A phosphoserine mark is found at serine 376 and serine 433.

This sequence belongs to the KLHL3 family. As to quaternary structure, homodimer. Component of the BCR(KLHL3) E3 ubiquitin ligase complex, at least composed of CUL3 and KLHL3 and RBX1. Interacts with CLDN8. Post-translationally, phosphorylation at Ser-433 by PKA or PKC decreases the interaction with WNK1 and WNK4, leading to inhibit their degradation by the BCR(KLHL3) complex. Phosphorylated at Ser-433 by PKC in response to angiotensin II signaling, decreasing ability to promote degradation of WNK1 and WNK4, leading to activation of Na-Cl cotransporter SLC12A3/NCC. Phosphorylation at Ser-433 is increased by insulin. Dephosphorylated at Ser-433 by calcineurin PPP3CA, promoting degradation of WNK1 and WNK4.

Its subcellular location is the cytoplasm. The protein localises to the cytoskeleton. The protein resides in the cytosol. Its pathway is protein modification; protein ubiquitination. In terms of biological role, substrate-specific adapter of a BCR (BTB-CUL3-RBX1) E3 ubiquitin ligase complex that acts as a regulator of ion transport in the distal nephron. The BCR(KLHL3) complex acts by mediating ubiquitination and degradation of WNK1 and WNK4, two activators of Na-Cl cotransporter SLC12A3/NCC in distal convoluted tubule cells of kidney, thereby regulating NaCl reabsorption. The BCR(KLHL3) complex also mediates ubiquitination and degradation of WNK3. The BCR(KLHL3) complex also mediates ubiquitination of CLDN8, a tight-junction protein required for paracellular chloride transport in the kidney, leading to its degradation. In Bos taurus (Bovine), this protein is Kelch-like protein 3 (KLHL3).